Consider the following 134-residue polypeptide: MARVKRGVTSHAKHKKVLKQARGFYGRRKNTIRTAKAAVDRSKQYAYRDRKVNKRNFRALWIQRINAAVREHGLTYGRFIDGLTKAGIEVDRKVLSDMAIHETEAFGALVAASKKALEYLKDAGTKNEFEAAVN.

It belongs to the bacterial ribosomal protein bL20 family.

Functionally, binds directly to 23S ribosomal RNA and is necessary for the in vitro assembly process of the 50S ribosomal subunit. It is not involved in the protein synthesizing functions of that subunit. The protein is Large ribosomal subunit protein bL20 of Rhizobium rhizogenes (strain K84 / ATCC BAA-868) (Agrobacterium radiobacter).